The sequence spans 592 residues: uncharacterized protein (592 aa).

Residues 1 to 23 (MRKAPLLRFTLASLALACSQAFA) form the signal peptide. Serine 37 functions as the Nucleophile in the catalytic mechanism. Residues aspartate 294 and histidine 297 contribute to the active site. The Autotransporter domain occupies 334–592 (HQDELRNQWQ…PDPGEPGGKP (259 aa)). Residues 572-592 (FTLTGYTPHTAPDPGEPGGKP) form a disordered region.

It belongs to the 'GDSL' lipolytic enzyme family.

This is an uncharacterized protein from Pseudomonas putida (Arthrobacter siderocapsulatus).